We begin with the raw amino-acid sequence, 241 residues long: Peroxisomal membrane protein 11C (241 aa).

The Cytoplasmic portion of the chain corresponds to 1–124 (MASLSGLASA…ARVLHVDSSR (124 aa)). Residues 125 to 149 (WWTLSTTLWALSLLLGVARSLWMLL) traverse the membrane as a helical segment. Residues 150 to 211 (KLRQRLRSPT…GVLWAGRFPP (62 aa)) lie on the Lumenal side of the membrane. Residues 212-227 (WLVGLMGTISSILSMY) form a helical membrane-spanning segment. At 228–241 (QAARAGGQAEATTP) the chain is on the cytoplasmic side.

This sequence belongs to the peroxin-11 family. In terms of assembly, homodimer. Heterodimer with either PEX11A or PEX11B. Interacts with FIS1.

The protein localises to the peroxisome membrane. Promotes membrane protrusion and elongation on the peroxisomal surface. The polypeptide is Peroxisomal membrane protein 11C (PEX11G) (Homo sapiens (Human)).